Consider the following 117-residue polypeptide: MKLCAVIIASLLVCVAVASSSDNQKEFAQEKEMTREETQSLGEHEKDDEVTGSEERSCIEEWKTCENDCECCGMSTLCAASWVDGHEIKLCRNEGGKLKKVLHFIQKSVSKIKSCKK.

The first 20 residues, 1–20, serve as a signal peptide directing secretion; that stretch reads MKLCAVIIASLLVCVAVASS. The segment at 20–55 is disordered; sequence SSDNQKEFAQEKEMTREETQSLGEHEKDDEVTGSEE. Residues 21–56 constitute a propeptide that is removed on maturation; the sequence is SDNQKEFAQEKEMTREETQSLGEHEKDDEVTGSEER. A compositionally biased stretch (basic and acidic residues) spans 23–55; the sequence is NQKEFAQEKEMTREETQSLGEHEKDDEVTGSEE. Intrachain disulfides connect cysteine 58-cysteine 72, cysteine 65-cysteine 78, cysteine 69-cysteine 115, and cysteine 71-cysteine 91.

This sequence belongs to the neurotoxin 03 (Tx2) family. 02 subfamily. HNTX-XV sub-subfamily. As to expression, expressed by the venom gland.

It localises to the secreted. Functionally, putative ion channel inhibitor. The sequence is that of Hainantoxin-XV-4 from Cyriopagopus hainanus (Chinese bird spider).